A 78-amino-acid polypeptide reads, in one-letter code: Acyl carrier protein (78 aa).

Residues 2–77 (SDIAERVKKI…DAIKFLEKNA (76 aa)) form the Carrier domain. The residue at position 37 (S37) is an O-(pantetheine 4'-phosphoryl)serine.

It belongs to the acyl carrier protein (ACP) family. In terms of processing, 4'-phosphopantetheine is transferred from CoA to a specific serine of apo-ACP by AcpS. This modification is essential for activity because fatty acids are bound in thioester linkage to the sulfhydryl of the prosthetic group.

Its subcellular location is the cytoplasm. The protein operates within lipid metabolism; fatty acid biosynthesis. Functionally, carrier of the growing fatty acid chain in fatty acid biosynthesis. In Xanthobacter autotrophicus (strain ATCC BAA-1158 / Py2), this protein is Acyl carrier protein.